Consider the following 151-residue polypeptide: Protein Smg homolog (151 aa).

Belongs to the Smg family.

The protein is Protein Smg homolog of Laribacter hongkongensis (strain HLHK9).